The following is an 864-amino-acid chain: DNA mismatch repair protein MutS (864 aa).

Residue G623 to S630 participates in ATP binding.

Belongs to the DNA mismatch repair MutS family.

This protein is involved in the repair of mismatches in DNA. It is possible that it carries out the mismatch recognition step. This protein has a weak ATPase activity. The sequence is that of DNA mismatch repair protein MutS from Polaromonas sp. (strain JS666 / ATCC BAA-500).